The chain runs to 538 residues: Chaperonin GroEL (538 aa).

Residues 29 to 32 (TLGP), 86 to 90 (DGTTT), glycine 413, 477 to 479 (NAA), and aspartate 493 contribute to the ATP site.

It belongs to the chaperonin (HSP60) family. As to quaternary structure, forms a cylinder of 14 subunits composed of two heptameric rings stacked back-to-back. Interacts with the co-chaperonin GroES.

Its subcellular location is the cytoplasm. It carries out the reaction ATP + H2O + a folded polypeptide = ADP + phosphate + an unfolded polypeptide.. Together with its co-chaperonin GroES, plays an essential role in assisting protein folding. The GroEL-GroES system forms a nano-cage that allows encapsulation of the non-native substrate proteins and provides a physical environment optimized to promote and accelerate protein folding. The polypeptide is Chaperonin GroEL (Scardovia inopinata (Bifidobacterium inopinatum)).